The primary structure comprises 360 residues: Endolytic peptidoglycan transglycosylase RlpA (360 aa).

Positions 1 to 17 are cleaved as a signal peptide; it reads MRKEWLWVGIASVLLSA. A lipid anchor (N-palmitoyl cysteine) is attached at Cys-18. A lipid anchor (S-diacylglycerol cysteine) is attached at Cys-18. The SPOR domain maps to 283–359; that stretch reads SAISGGYVVQ…AQQQSFIVAA (77 aa).

The protein belongs to the RlpA family.

The protein localises to the cell membrane. In terms of biological role, lytic transglycosylase with a strong preference for naked glycan strands that lack stem peptides. In Yersinia pestis, this protein is Endolytic peptidoglycan transglycosylase RlpA.